Here is a 309-residue protein sequence, read N- to C-terminus: HPr kinase/phosphorylase (309 aa).

Active-site residues include H144 and K165. ATP is bound at residue 159–166 (GDSGLGKS). Residue S166 coordinates Mg(2+). D183 acts as the Proton acceptor; for phosphorylation activity. Proton donor; for dephosphorylation activity in catalysis. Residues 206–215 (IEVRGLGLID) are important for the catalytic mechanism of both phosphorylation and dephosphorylation. E207 provides a ligand contact to Mg(2+). The active site involves R249. The interval 270 to 275 (PIRQGR) is important for the catalytic mechanism of dephosphorylation.

It belongs to the HPrK/P family. Homohexamer. Requires Mg(2+) as cofactor.

It carries out the reaction [HPr protein]-L-serine + ATP = [HPr protein]-O-phospho-L-serine + ADP + H(+). The enzyme catalyses [HPr protein]-O-phospho-L-serine + phosphate + H(+) = [HPr protein]-L-serine + diphosphate. Catalyzes the ATP- as well as the pyrophosphate-dependent phosphorylation of a specific serine residue in HPr, a phosphocarrier protein of the phosphoenolpyruvate-dependent sugar phosphotransferase system (PTS). HprK/P also catalyzes the pyrophosphate-producing, inorganic phosphate-dependent dephosphorylation (phosphorolysis) of seryl-phosphorylated HPr (P-Ser-HPr). In Mycoplasmopsis pulmonis (strain UAB CTIP) (Mycoplasma pulmonis), this protein is HPr kinase/phosphorylase (hprK).